Consider the following 526-residue polypeptide: MATQHFTNGSATDDGETALEHIIKSLETPTMKCEGTHFDSHVPHTFVIFGASGDLAKKKIYPTLWWLYRDNLLPKSTKFCGYARSKLTIEELRAKCHQYMKVQPDEQAKYEEFWQNHDYAAGSYDQRSDFVALKERLSSLESCNCSCNRIFYLALPPSVFERVTVNIKDICLAERGWNRVIIEKPFGRDDVTSKKLSDHLASLFHEDQLYRIDHYLGKEMVQNLMTIRFANKILNSTWNRENIASVLITFKEPFGTQGRGGYFDEFGIIRDVMQNHLLQILSLVAMEKPTSCQPDDIRDEKVKVLKSIPALTLDDMVLGQYVGNPNGVGEQREGYLDDPTVSNDSNTPTYAQGVLRINNERWDGVPFILRCGKALDERKAVVRIQYRDVPGDIFEGNSKRNELVIRVQPGEALYFKMMTKSPGITFDIEETELDLTYEHRYKNSYLPDAYERLILDVFCGSQMHFVRSDELSEAWRIFTPVLNEIENNKVKPIPYVFGSRGPKEADQKTSENNFKYYGSYKWIGKK.

Residues 50 to 57, Arg84, and Lys184 each bind NADP(+); that span reads GASGDLAK. D-glucose 6-phosphate-binding positions include Lys184, 214 to 218, Glu252, and Asp271; that span reads HYLGK. The active-site Proton acceptor is the His276. Arg370 lines the NADP(+) pocket. D-glucose 6-phosphate contacts are provided by Lys373 and Arg378. NADP(+) is bound by residues Lys379, Arg383, and Arg406. Gln408 lines the D-glucose 6-phosphate pocket. Residues 414–416, 434–436, Arg500, Tyr516, and Trp522 each bind NADP(+); these read YFK and DLT.

This sequence belongs to the glucose-6-phosphate dehydrogenase family.

The protein resides in the cytoplasm. The protein localises to the cytosol. The catalysed reaction is D-glucose 6-phosphate + NADP(+) = 6-phospho-D-glucono-1,5-lactone + NADPH + H(+). Its pathway is carbohydrate degradation; pentose phosphate pathway; D-ribulose 5-phosphate from D-glucose 6-phosphate (oxidative stage): step 1/3. In terms of biological role, cytosolic glucose-6-phosphate dehydrogenase that catalyzes the first and rate-limiting step of the oxidative branch within the pentose phosphate pathway/shunt, an alternative route to glycolysis for the dissimilation of carbohydrates and a major source of reducing power and metabolic intermediates for fatty acid and nucleic acid biosynthetic processes. The protein is Glucose-6-phosphate 1-dehydrogenase (ZW) of Ceratitis capitata (Mediterranean fruit fly).